A 710-amino-acid chain; its full sequence is Dihydroxyacetone synthase (710 aa).

Thiamine diphosphate contacts are provided by residues His78 and Gly128–Leu130. 3 residues coordinate Mg(2+): Asp169, Asn199, and Val201. Asn199 serves as a coordination point for thiamine diphosphate. 3 residues coordinate thiamine diphosphate: His275, Glu433, and Phe461. The Proton donor role is filled by Glu433. Residues Asn708–Leu710 carry the Microbody targeting signal motif.

The protein belongs to the transketolase family. Mg(2+) serves as cofactor. Ca(2+) is required as a cofactor. Requires Mn(2+) as cofactor. The cofactor is Co(2+). It depends on thiamine diphosphate as a cofactor.

Its subcellular location is the peroxisome. The enzyme catalyses D-xylulose 5-phosphate + formaldehyde = dihydroxyacetone + D-glyceraldehyde 3-phosphate. Functionally, this is the major methanol assimilatory enzyme from the methylotrophic Hansenula polymorpha. The chain is Dihydroxyacetone synthase (DAS) from Pichia angusta (Yeast).